Reading from the N-terminus, the 398-residue chain is Tryptophan synthase beta chain (398 aa).

K92 carries the N6-(pyridoxal phosphate)lysine modification.

The protein belongs to the TrpB family. As to quaternary structure, tetramer of two alpha and two beta chains. It depends on pyridoxal 5'-phosphate as a cofactor.

It carries out the reaction (1S,2R)-1-C-(indol-3-yl)glycerol 3-phosphate + L-serine = D-glyceraldehyde 3-phosphate + L-tryptophan + H2O. The protein operates within amino-acid biosynthesis; L-tryptophan biosynthesis; L-tryptophan from chorismate: step 5/5. The beta subunit is responsible for the synthesis of L-tryptophan from indole and L-serine. This Nitrosospira multiformis (strain ATCC 25196 / NCIMB 11849 / C 71) protein is Tryptophan synthase beta chain.